The following is a 1295-amino-acid chain: DNA-directed RNA polymerase subunit beta' (1295 aa).

Zn(2+)-binding residues include cysteine 60, cysteine 62, cysteine 75, and cysteine 78. Residues aspartate 516, aspartate 518, and aspartate 520 each coordinate Mg(2+). Positions 841, 914, 921, and 924 each coordinate Zn(2+).

It belongs to the RNA polymerase beta' chain family. In terms of assembly, the RNAP catalytic core consists of 2 alpha, 1 beta, 1 beta' and 1 omega subunit. When a sigma factor is associated with the core the holoenzyme is formed, which can initiate transcription. Requires Mg(2+) as cofactor. Zn(2+) is required as a cofactor.

It carries out the reaction RNA(n) + a ribonucleoside 5'-triphosphate = RNA(n+1) + diphosphate. Its function is as follows. DNA-dependent RNA polymerase catalyzes the transcription of DNA into RNA using the four ribonucleoside triphosphates as substrates. This is DNA-directed RNA polymerase subunit beta' from Dehalococcoides mccartyi (strain ATCC BAA-2266 / KCTC 15142 / 195) (Dehalococcoides ethenogenes (strain 195)).